The primary structure comprises 114 residues: Cytochrome c2 (114 aa).

A Pyrrolidone carboxylic acid modification is found at glutamine 1. Cysteine 13, cysteine 16, histidine 17, and methionine 93 together coordinate heme c.

The protein belongs to the cytochrome c family. In terms of processing, binds 1 heme c group covalently per subunit.

Its subcellular location is the periplasm. Its function is as follows. Cytochrome c2 is found mainly in purple, non-sulfur, photosynthetic bacteria where it functions as the electron donor to the oxidized bacteriochlorophyll in the photophosphorylation pathway. However, it may also have a role in the respiratory chain and is found in some non-photosynthetic bacteria. In Rhodopseudomonas palustris, this protein is Cytochrome c2.